Reading from the N-terminus, the 287-residue chain is MTNPYIVAEGVSYAYGREEADGAAPVRLALDGVDLDVRRGEFLAILGMNGSGKSTLARHLNALLLPRAGRVLVDGLDTREEANLWSIRDRVGMVFQNPDNQIVAAVVEEDVAFGPENQGLPSAEIRARVAEALEAVGMSEHRERSPHLLSGGQKQRVAIAGALAMRPACLVLDEPTAMLDPSGRAEVLAVVRRLNRELGMTVVWITHFMDEAVVADRVVVMAEGRVQMVGTPREVFAQADRIRALRLDLPPAVQAAERLRAQGVPLPRTILTLDELVEALCQLYSRP.

The 243-residue stretch at 6-248 folds into the ABC transporter domain; the sequence is IVAEGVSYAY…ADRIRALRLD (243 aa). An ATP-binding site is contributed by 47–54; that stretch reads GMNGSGKS.

It belongs to the ABC transporter superfamily. Energy-coupling factor EcfA family. In terms of assembly, forms a stable energy-coupling factor (ECF) transporter complex composed of 2 membrane-embedded substrate-binding proteins (S component), 2 ATP-binding proteins (A component) and 2 transmembrane proteins (T component).

The protein localises to the cell membrane. Its function is as follows. ATP-binding (A) component of a common energy-coupling factor (ECF) ABC-transporter complex. Unlike classic ABC transporters this ECF transporter provides the energy necessary to transport a number of different substrates. This is Energy-coupling factor transporter ATP-binding protein EcfA1 from Symbiobacterium thermophilum (strain DSM 24528 / JCM 14929 / IAM 14863 / T).